The sequence spans 834 residues: WPP domain-associated protein (834 aa).

3 coiled-coil regions span residues 410 to 456 (SFGN…RLQH), 574 to 700 (SLDT…VLAI), and 792 to 812 (AEAE…LVEK).

As to quaternary structure, interacts with MAF1. As to expression, expressed in seedlings, leaves and fruits.

The protein localises to the golgi apparatus. Its subcellular location is the cytoplasm. This Solanum lycopersicum (Tomato) protein is WPP domain-associated protein (WAP).